We begin with the raw amino-acid sequence, 235 residues long: Transmembrane protein 215 (235 aa).

The next 2 membrane-spanning stretches (helical) occupy residues 12–32 (LVVA…VSGM) and 40–60 (IPLL…IALA). Positions 99-145 (SDLESGKGSSDELAKKAGLRGKPPPQSQGEVSVASSINSPTPTEEGE) are disordered. A compositionally biased stretch (polar residues) spans 125 to 140 (SQGEVSVASSINSPTP).

Its subcellular location is the membrane. The protein is Transmembrane protein 215 (TMEM215) of Homo sapiens (Human).